Consider the following 720-residue polypeptide: Polyribonucleotide nucleotidyltransferase (720 aa).

Mg(2+) contacts are provided by Asp487 and Asp493. The 60-residue stretch at 554–613 (PRIETFKIPTDKIREVIGTGGKVIREIVEKTGAKVNIEDDGTVKVASSDGEAMKAAIKWI) folds into the KH domain. The S1 motif domain maps to 623–691 (GQIYDGTVVK…DRGKTRLSMK (69 aa)). Residues 692–720 (AVDQTTGEDLEAKQKAEGGAEAPREAAGE) form a disordered region. Positions 701–720 (LEAKQKAEGGAEAPREAAGE) are enriched in basic and acidic residues.

Belongs to the polyribonucleotide nucleotidyltransferase family. Mg(2+) is required as a cofactor.

It localises to the cytoplasm. It catalyses the reaction RNA(n+1) + phosphate = RNA(n) + a ribonucleoside 5'-diphosphate. Involved in mRNA degradation. Catalyzes the phosphorolysis of single-stranded polyribonucleotides processively in the 3'- to 5'-direction. This Bradyrhizobium sp. (strain BTAi1 / ATCC BAA-1182) protein is Polyribonucleotide nucleotidyltransferase.